Reading from the N-terminus, the 272-residue chain is 2-dehydro-3-deoxyphosphooctonate aldolase (272 aa).

Belongs to the KdsA family.

It localises to the cytoplasm. It carries out the reaction D-arabinose 5-phosphate + phosphoenolpyruvate + H2O = 3-deoxy-alpha-D-manno-2-octulosonate-8-phosphate + phosphate. It functions in the pathway carbohydrate biosynthesis; 3-deoxy-D-manno-octulosonate biosynthesis; 3-deoxy-D-manno-octulosonate from D-ribulose 5-phosphate: step 2/3. The protein operates within bacterial outer membrane biogenesis; lipopolysaccharide biosynthesis. The protein is 2-dehydro-3-deoxyphosphooctonate aldolase of Trichlorobacter lovleyi (strain ATCC BAA-1151 / DSM 17278 / SZ) (Geobacter lovleyi).